A 372-amino-acid polypeptide reads, in one-letter code: Glutamate 5-kinase (372 aa).

K14 contributes to the ATP binding site. Substrate contacts are provided by S55, D142, and N154. ATP-binding positions include 174–175 (SD) and 216–222 (TGGMETK). Residues 279-357 (QGSIIVDLGA…WEIADVLGHK (79 aa)) enclose the PUA domain.

Belongs to the glutamate 5-kinase family.

Its subcellular location is the cytoplasm. It carries out the reaction L-glutamate + ATP = L-glutamyl 5-phosphate + ADP. It functions in the pathway amino-acid biosynthesis; L-proline biosynthesis; L-glutamate 5-semialdehyde from L-glutamate: step 1/2. Catalyzes the transfer of a phosphate group to glutamate to form L-glutamate 5-phosphate. The chain is Glutamate 5-kinase from Carboxydothermus hydrogenoformans (strain ATCC BAA-161 / DSM 6008 / Z-2901).